The sequence spans 179 residues: tRNA (cytidine(56)-2'-O)-methyltransferase (179 aa).

S-adenosyl-L-methionine is bound by residues Leu-82, 112–116 (GAEKV), and 130–137 (VGNQPHSE).

The protein belongs to the aTrm56 family. In terms of assembly, homodimer.

The protein localises to the cytoplasm. It carries out the reaction cytidine(56) in tRNA + S-adenosyl-L-methionine = 2'-O-methylcytidine(56) in tRNA + S-adenosyl-L-homocysteine + H(+). Specifically catalyzes the AdoMet-dependent 2'-O-ribose methylation of cytidine at position 56 in tRNAs. The chain is tRNA (cytidine(56)-2'-O)-methyltransferase from Methanococcus maripaludis (strain C6 / ATCC BAA-1332).